Here is a 596-residue protein sequence, read N- to C-terminus: Nodulation outer protein X (596 aa).

It localises to the secreted. This chain is Nodulation outer protein X (nopX), found in Sinorhizobium fredii (strain NBRC 101917 / NGR234).